A 408-amino-acid polypeptide reads, in one-letter code: Acetylornithine/succinyldiaminopimelate aminotransferase (408 aa).

Pyridoxal 5'-phosphate-binding positions include 108 to 109 (GA) and phenylalanine 141. Arginine 144 contributes to the N(2)-acetyl-L-ornithine binding site. 226-229 (DEIQ) lines the pyridoxal 5'-phosphate pocket. At lysine 255 the chain carries N6-(pyridoxal phosphate)lysine. Threonine 283 contacts N(2)-acetyl-L-ornithine. Residue threonine 284 participates in pyridoxal 5'-phosphate binding.

The protein belongs to the class-III pyridoxal-phosphate-dependent aminotransferase family. ArgD subfamily. In terms of assembly, homodimer. Requires pyridoxal 5'-phosphate as cofactor.

Its subcellular location is the cytoplasm. It carries out the reaction N(2)-acetyl-L-ornithine + 2-oxoglutarate = N-acetyl-L-glutamate 5-semialdehyde + L-glutamate. It catalyses the reaction N-succinyl-(2S,6S)-2,6-diaminopimelate + 2-oxoglutarate = (S)-2-succinylamino-6-oxoheptanedioate + L-glutamate. The protein operates within amino-acid biosynthesis; L-arginine biosynthesis; N(2)-acetyl-L-ornithine from L-glutamate: step 4/4. Its pathway is amino-acid biosynthesis; L-lysine biosynthesis via DAP pathway; LL-2,6-diaminopimelate from (S)-tetrahydrodipicolinate (succinylase route): step 2/3. Involved in both the arginine and lysine biosynthetic pathways. The sequence is that of Acetylornithine/succinyldiaminopimelate aminotransferase from Buchnera aphidicola subsp. Acyrthosiphon pisum (strain APS) (Acyrthosiphon pisum symbiotic bacterium).